Here is a 205-residue protein sequence, read N- to C-terminus: Small ribosomal subunit protein uS4 (205 aa).

In terms of domain architecture, S4 RNA-binding spans Ser94–Leu157.

The protein belongs to the universal ribosomal protein uS4 family. As to quaternary structure, part of the 30S ribosomal subunit. Contacts protein S5. The interaction surface between S4 and S5 is involved in control of translational fidelity.

Functionally, one of the primary rRNA binding proteins, it binds directly to 16S rRNA where it nucleates assembly of the body of the 30S subunit. Its function is as follows. With S5 and S12 plays an important role in translational accuracy. This chain is Small ribosomal subunit protein uS4, found in Hyphomonas neptunium (strain ATCC 15444).